The chain runs to 327 residues: DNA-directed RNA polymerase subunit alpha (327 aa).

Residues 1 to 233 (MQNVLKSFLT…HQLAAFVDLK (233 aa)) form an alpha N-terminal domain (alpha-NTD) region. Residues 247–327 (VNPLLLRPVE…GWPPADLTDQ (81 aa)) form an alpha C-terminal domain (alpha-CTD) region.

It belongs to the RNA polymerase alpha chain family. As to quaternary structure, homodimer. The RNAP catalytic core consists of 2 alpha, 1 beta, 1 beta' and 1 omega subunit. When a sigma factor is associated with the core the holoenzyme is formed, which can initiate transcription.

The enzyme catalyses RNA(n) + a ribonucleoside 5'-triphosphate = RNA(n+1) + diphosphate. In terms of biological role, DNA-dependent RNA polymerase catalyzes the transcription of DNA into RNA using the four ribonucleoside triphosphates as substrates. This chain is DNA-directed RNA polymerase subunit alpha, found in Coxiella burnetii (strain CbuK_Q154) (Coxiella burnetii (strain Q154)).